Consider the following 359-residue polypeptide: Ribosomal RNA large subunit methyltransferase M (359 aa).

Residues Ser186, 219-222 (CPGG), Asp238, Asp258, and Asp275 contribute to the S-adenosyl-L-methionine site. The active-site Proton acceptor is the Lys304.

It belongs to the class I-like SAM-binding methyltransferase superfamily. RNA methyltransferase RlmE family. RlmM subfamily. Monomer.

The protein localises to the cytoplasm. The catalysed reaction is cytidine(2498) in 23S rRNA + S-adenosyl-L-methionine = 2'-O-methylcytidine(2498) in 23S rRNA + S-adenosyl-L-homocysteine + H(+). Its function is as follows. Catalyzes the 2'-O-methylation at nucleotide C2498 in 23S rRNA. The chain is Ribosomal RNA large subunit methyltransferase M from Aliivibrio fischeri (strain MJ11) (Vibrio fischeri).